The sequence spans 412 residues: NADH-quinone oxidoreductase subunit 4 (412 aa).

Belongs to the complex I 49 kDa subunit family. NDH-1 is composed of at least 14 different subunits, Nqo1 to Nqo14. The complex has a L-shaped structure, with the hydrophobic arm (subunits Nqo7, Nqo8, Nqo10 to Nqo14) embedded in the inner membrane and the hydrophilic peripheral arm (subunits Nqo1 to Nqo6, Nqo9) protruding into the bacterial cytoplasm. The hydrophilic domain contains all the redox centers.

Its subcellular location is the cell inner membrane. The catalysed reaction is a quinone + NADH + 5 H(+)(in) = a quinol + NAD(+) + 4 H(+)(out). Its function is as follows. NDH-1 shuttles electrons from NADH, via FMN and iron-sulfur (Fe-S) centers, to quinones in the respiratory chain. The immediate electron acceptor for the enzyme in this species is believed to be ubiquinone. Couples the redox reaction to proton translocation (for every two electrons transferred, four hydrogen ions are translocated across the cytoplasmic membrane), and thus conserves the redox energy in a proton gradient. The polypeptide is NADH-quinone oxidoreductase subunit 4 (nqo4) (Paracoccus denitrificans).